A 331-amino-acid polypeptide reads, in one-letter code: Isopenicillin N synthase (331 aa).

Isopenicillin N-binding residues include Arg87, Tyr91, Ser183, and Tyr189. The N-[(5S)-5-amino-5-carboxypentanoyl]-L-cysteinyl-D-valine site is built by Arg87, Tyr91, Ser183, Tyr189, His214, and Asp216. Positions 181–288 (LSSVVLIRYP…RQSLPFFVNL (108 aa)) constitute a Fe2OG dioxygenase domain. Fe(2+) contacts are provided by His214, Asp216, and His270. Arg279 lines the 2-oxoglutarate pocket. An isopenicillin N-binding site is contributed by Ser281. Ser281 contributes to the N-[(5S)-5-amino-5-carboxypentanoyl]-L-cysteinyl-D-valine binding site.

Belongs to the iron/ascorbate-dependent oxidoreductase family. Fe(2+) serves as cofactor.

Its subcellular location is the cytoplasm. It is found in the cytosol. It catalyses the reaction N-[(5S)-5-amino-5-carboxypentanoyl]-L-cysteinyl-D-valine + O2 = isopenicillin N + 2 H2O. It functions in the pathway antibiotic biosynthesis; penicillin G biosynthesis; penicillin G from L-alpha-aminoadipate and L-cysteine and L-valine: step 2/3. Isopenicillin N synthase; part of the gene cluster that mediates the biosynthesis of penicillin, the world's most important antibiotic. The first step of the pathway is performed by the trimodular NRPS acvA that produces the tripeptide N-[(5S)-5-amino-5-carboxypentanoyl]-L-cysteinyl-D-valine (LLD-ACV or ACV) via condensation of the 3 residues L-2-aminoadipate, L-cysteine and L-valine. The precursor amino acids for penicillin biosynthesis are withdrawn from the vacuolar amino acid pool by the MFS-type transporter penV. Each of the constituent amino acids of the tripeptide acv are activated as aminoacyl-adenylates with peptide bonds formed through the participation of amino acid thioester intermediates. The tripeptide ACV is then cyclized to form isopenicillin N (IPN) by the isopenicillin N synthase ipnA that forms the beta-lactam nucleus. Finally, the alpha-aminoadipyl side chain is exchanged for phenylacetic acid by the isopenicillin N acyltransferase aatA to yield penicillin. This step occurs in the peroxisomal matrix and the penM and paaT transporters are involved in the isopenicillin N and phenylacetic acid import into the peroxisome, respectively. This is Isopenicillin N synthase from Penicillium rubens (strain ATCC 28089 / DSM 1075 / NRRL 1951 / Wisconsin 54-1255) (Penicillium chrysogenum).